Here is a 358-residue protein sequence, read N- to C-terminus: 3'(2'),5'-bisphosphate nucleotidase (358 aa).

The active-site Proton acceptor is D52. Mg(2+) contacts are provided by E78, D140, I142, and D143. T145 acts as the Proton acceptor in catalysis. Positions 145, 239, 263, 266, 280, and 292 each coordinate adenosine 3',5'-bisphosphate. H239, S263, K266, R280, and D292 together coordinate AMP. D292 contacts Mg(2+).

This sequence belongs to the inositol monophosphatase superfamily. It depends on Mg(2+) as a cofactor. In terms of tissue distribution, is constitutively transcribed in both roots and shoots.

It carries out the reaction 3'-phosphoadenylyl sulfate + H2O = adenosine 5'-phosphosulfate + phosphate. The catalysed reaction is adenosine 3',5'-bisphosphate + H2O = AMP + phosphate. The enzyme catalyses adenosine 2',5'-bisphosphate + H2O = AMP + phosphate. Inhibited by Ca(2+), Li(+), and Na(+) and activated by K(+). Phosphatase that converts adenosine 3'-phosphate 5'-phosphosulfate (PAPS) to adenosine 5'-phosphosulfate (APS) and 3'(2')-phosphoadenosine 5'-phosphate (PAP) to AMP. May regulate the flux of sulfur in the sulfur-activation pathway by converting PAPS to APS. Shows no activity on myo-inositol 1-phosphate, beta-glycerol phosphate, NADPH, NADP and 5'-AMP. The polypeptide is 3'(2'),5'-bisphosphate nucleotidase (Oryza sativa (Rice)).